We begin with the raw amino-acid sequence, 782 residues long: uncharacterized protein (782 aa).

Disordered regions lie at residues 1 to 25 (MFSP…STTS) and 175 to 195 (RPRT…EDLR). A compositionally biased stretch (low complexity) spans 13 to 25 (ESESVSNCESTTS). The span at 183–195 (RAGDASMSREDLR) shows a compositional bias: basic and acidic residues. Coiled-coil stretches lie at residues 223–331 (RENR…STLN), 348–398 (LSQF…VSTL), 428–601 (NRIN…QLLN), and 699–743 (TIET…IIAK). A disordered region spans residues 748-782 (NIPKTEKSSPMKKVPPIENFRAKSQTSITGLSPVL). The span at 769-782 (AKSQTSITGLSPVL) shows a compositional bias: polar residues.

This is an uncharacterized protein from Caenorhabditis elegans.